We begin with the raw amino-acid sequence, 258 residues long: Phosphate import ATP-binding protein PstB (258 aa).

The ABC transporter domain maps to 12 to 253 (IEVKNLNFYY…PARKETEDYI (242 aa)). Position 44–51 (44–51 (GPSGCGKS)) interacts with ATP.

The protein belongs to the ABC transporter superfamily. Phosphate importer (TC 3.A.1.7) family. As to quaternary structure, the complex is composed of two ATP-binding proteins (PstB), two transmembrane proteins (PstC and PstA) and a solute-binding protein (PstS).

Its subcellular location is the cell inner membrane. It carries out the reaction phosphate(out) + ATP + H2O = ADP + 2 phosphate(in) + H(+). In terms of biological role, part of the ABC transporter complex PstSACB involved in phosphate import. Responsible for energy coupling to the transport system. In Bordetella avium (strain 197N), this protein is Phosphate import ATP-binding protein PstB.